Consider the following 190-residue polypeptide: uncharacterized protein (190 aa).

An HTH tetR-type domain is found at 1-58 (MDKRILAETFRLIKQKGFSFTMNDLAAALGTSKRTLYAYYSSKDQLVEAVVEQFIAEM). A DNA-binding region (H-T-H motif) is located at residues 21–40 (TMNDLAAALGTSKRTLYAYY).

This is an uncharacterized protein from Bacillus subtilis (strain 168).